Consider the following 166-residue polypeptide: Small ribosomal subunit protein bS6 (166 aa).

The interval 97–166 (EEGPSAMMRK…EEAETATDGE (70 aa)) is disordered. Residues 105 to 159 (RKADRDRERDDRGGGFRGEREGGFRGDREGGFRGGDRDGGGFRGDRGPRRPREEA) are compositionally biased toward basic and acidic residues.

Belongs to the bacterial ribosomal protein bS6 family.

In terms of biological role, binds together with bS18 to 16S ribosomal RNA. The sequence is that of Small ribosomal subunit protein bS6 from Bradyrhizobium diazoefficiens (strain JCM 10833 / BCRC 13528 / IAM 13628 / NBRC 14792 / USDA 110).